Reading from the N-terminus, the 568-residue chain is Autophagy-related protein 18 (568 aa).

The stretch at 19-57 (KPSSSVNFITFNQDGSCIAVGNNKGYSIFTTNPFTKCYD) is one WD 1 repeat. The segment covering 162–171 (STDTSNSADN) has biased composition (polar residues). Residues 162-210 (STDTSNSADNSGSIGSGPASGSGAGSGSASMTSTDSTPDAQSHSYLAYP) form a disordered region. The segment covering 175–187 (IGSGPASGSGAGS) has biased composition (gly residues). The span at 188-198 (GSASMTSTDST) shows a compositional bias: low complexity. WD repeat units lie at residues 268–308 (AHKS…KLYQ) and 313–352 (TYPTKVYSVAFSPDNRYVVTTSASGTVHIFRLGEDESLES). Positions 309–313 (FRRGT) match the L/FRRG motif motif. Positions 350–429 (LESKHKRKRA…ISGMSEDGKE (80 aa)) are disordered. Residues 375 to 394 (DLDDEIEDDGDDSDVDDVES) are compositionally biased toward acidic residues. The span at 405–421 (LSQGSSNSYTSMNSGIS) shows a compositional bias: polar residues. WD repeat units lie at residues 464–508 (DFLP…DMVP) and 518–558 (APAS…GGDC).

The protein belongs to the WD repeat PROPPIN family. In terms of assembly, component of the PI(3,5)P2 regulatory complex.

Its subcellular location is the preautophagosomal structure membrane. The protein resides in the vacuole membrane. It localises to the endosome membrane. The PI(3,5)P2 regulatory complex regulates both the synthesis and turnover of phosphatidylinositol 3,5-bisphosphate (PtdIns(3,5)P2). Necessary for proper vacuole morphology. Plays an important role in osmotically-induced vacuole fragmentation. Required for cytoplasm to vacuole transport (Cvt) vesicle formation, pexophagy and starvation-induced autophagy. Involved in correct ATG9 trafficking to the pre-autophagosomal structure. Might also be involved in premeiotic DNA replication. The polypeptide is Autophagy-related protein 18 (ATG18) (Meyerozyma guilliermondii (strain ATCC 6260 / CBS 566 / DSM 6381 / JCM 1539 / NBRC 10279 / NRRL Y-324) (Yeast)).